A 197-amino-acid chain; its full sequence is LexA repressor (197 aa).

Residues 28–47 (VREIARRFRITPRGAQLHLV) constitute a DNA-binding region (H-T-H motif). Active-site for autocatalytic cleavage activity residues include serine 119 and lysine 156.

It belongs to the peptidase S24 family. As to quaternary structure, homodimer.

It carries out the reaction Hydrolysis of Ala-|-Gly bond in repressor LexA.. Functionally, represses a number of genes involved in the response to DNA damage (SOS response), including recA and lexA. In the presence of single-stranded DNA, RecA interacts with LexA causing an autocatalytic cleavage which disrupts the DNA-binding part of LexA, leading to derepression of the SOS regulon and eventually DNA repair. This is LexA repressor from Thermotoga neapolitana.